Here is a 398-residue protein sequence, read N- to C-terminus: uncharacterized protein (398 aa).

6 consecutive transmembrane segments (helical) span residues 37–57 (LVIL…FVQF), 92–112 (IFNA…FIFG), 122–142 (LLTL…SYIP), 186–206 (LFYG…ILII), 228–248 (IGGI…VIGT), and 268–288 (FGVA…NIVL).

The protein localises to the cell membrane. This is an uncharacterized protein from Mycoplasma genitalium (strain ATCC 33530 / DSM 19775 / NCTC 10195 / G37) (Mycoplasmoides genitalium).